Consider the following 188-residue polypeptide: Adenine phosphoribosyltransferase (188 aa).

It belongs to the purine/pyrimidine phosphoribosyltransferase family. As to quaternary structure, homodimer.

It localises to the cytoplasm. The enzyme catalyses AMP + diphosphate = 5-phospho-alpha-D-ribose 1-diphosphate + adenine. It participates in purine metabolism; AMP biosynthesis via salvage pathway; AMP from adenine: step 1/1. In terms of biological role, catalyzes a salvage reaction resulting in the formation of AMP, that is energically less costly than de novo synthesis. This is Adenine phosphoribosyltransferase from Salinispora arenicola (strain CNS-205).